A 732-amino-acid polypeptide reads, in one-letter code: Acylamino-acid-releasing enzyme (732 aa).

The residue at position 1 (Met-1) is an N-acetylmethionine. Position 187 is a phosphoserine (Ser-187). Residues Ser-587, Asp-675, and His-707 each act as charge relay system in the active site.

It belongs to the peptidase S9C family. In terms of assembly, homotetramer. Expressed in the liver (at protein level).

It localises to the cytoplasm. It carries out the reaction Cleavage of an N-acetyl or N-formyl amino acid from the N-terminus of a polypeptide.. Its activity is regulated as follows. Homotetramerization is required for activity. Tetramerization results in the formation of a gated channel which is involved in substrate selection and substrate access to the catalytic sites. In terms of biological role, this enzyme catalyzes the hydrolysis of the N-terminal peptide bond of an N-acetylated peptide to generate an N-acetylated amino acid and a peptide with a free N-terminus. It preferentially cleaves off Ac-Ala, Ac-Met and Ac-Ser. Also, involved in the degradation of oxidized and glycated proteins. The chain is Acylamino-acid-releasing enzyme (APEH) from Sus scrofa (Pig).